A 448-amino-acid chain; its full sequence is Ribosomal protein uS12 methylthiotransferase RimO (448 aa).

Residues 10–120 (PNIGFVSLGC…VMEHVHKYVP (111 aa)) enclose the MTTase N-terminal domain. [4Fe-4S] cluster-binding residues include C19, C55, C84, C152, C156, and C159. Residues 138 to 379 (LTPKHYAYLK…MELQQQISAQ (242 aa)) enclose the Radical SAM core domain. The region spanning 382 to 448 (QQKIGKTLPV…ADEYDLWGTC (67 aa)) is the TRAM domain.

This sequence belongs to the methylthiotransferase family. RimO subfamily. The cofactor is [4Fe-4S] cluster.

It localises to the cytoplasm. It carries out the reaction L-aspartate(89)-[ribosomal protein uS12]-hydrogen + (sulfur carrier)-SH + AH2 + 2 S-adenosyl-L-methionine = 3-methylsulfanyl-L-aspartate(89)-[ribosomal protein uS12]-hydrogen + (sulfur carrier)-H + 5'-deoxyadenosine + L-methionine + A + S-adenosyl-L-homocysteine + 2 H(+). Functionally, catalyzes the methylthiolation of an aspartic acid residue of ribosomal protein uS12. This Mannheimia succiniciproducens (strain KCTC 0769BP / MBEL55E) protein is Ribosomal protein uS12 methylthiotransferase RimO.